A 118-amino-acid chain; its full sequence is MAKKDELGRRGESVAAHWLEAHGYVLIGRNWRIRSGEIDIIARTGNITVFVEVKTRATTHYGHPLEAITPEKAARLRRLTAEWCRTYGPLPGALRVDAIGVLNAWSANPEIHHLPGIV.

The protein belongs to the UPF0102 family.

This Leifsonia xyli subsp. xyli (strain CTCB07) protein is UPF0102 protein Lxx14785.